The following is a 207-amino-acid chain: MTVANWQVRDFTRILNAGELQGRLEQARTDFGALLAEIVYFHPPGATPEEGDDEYILTGQGLVYVYLSEQTARQCALNRLLPSNSSNFGTVVTAIPPWLMDTQTLNLTLQERCDQGGIVNYYHGSRTNEFFLAIMLSNCFVRFGTDEINGASYGFYARRGNYTEEGEDDDNEIGDEGEAGGAEIRDYQFGDLVNYPIVALGSSRLSA.

Functionally, involved in tumor formation and increases auxin and cytokinin effects in host plants. The chain is Protein 6b (6b) from Agrobacterium vitis (Rhizobium vitis).